A 172-amino-acid chain; its full sequence is Shikimate kinase (172 aa).

8 to 15 (GARASGKT) provides a ligand contact to ATP.

It belongs to the shikimate kinase family.

It localises to the cytoplasm. The enzyme catalyses shikimate + ATP = 3-phosphoshikimate + ADP + H(+). It functions in the pathway metabolic intermediate biosynthesis; chorismate biosynthesis; chorismate from D-erythrose 4-phosphate and phosphoenolpyruvate: step 5/7. This is Shikimate kinase from Oleidesulfovibrio alaskensis (strain ATCC BAA-1058 / DSM 17464 / G20) (Desulfovibrio alaskensis).